Here is a 378-residue protein sequence, read N- to C-terminus: Putative glycosyltransferase ORF378 (378 aa).

The protein belongs to the glycosyltransferase group 1 family. Glycosyltransferase 4 subfamily.

The polypeptide is Putative glycosyltransferase ORF378 (Acidianus sp. F28 (AFV-2)).